A 126-amino-acid chain; its full sequence is MPEPAKSAPAPKKGSKKAVTKTQKKGDKKRKKSRKESYSIYVYKVLKQVHPDTGISSKAMGIMNSFVNDIFERIAGEASRLAHYNKRSTITSREIQTAVRLLLPGELAKHAVSEGTKAVTKYTSSK.

The span at 1 to 12 (MPEPAKSAPAPK) shows a compositional bias: low complexity. The interval 1 to 36 (MPEPAKSAPAPKKGSKKAVTKTQKKGDKKRKKSRKE) is disordered. N6-acetyllysine occurs at positions 6 and 13. Residues 13–34 (KGSKKAVTKTQKKGDKKRKKSR) show a composition bias toward basic residues. A Phosphoserine modification is found at serine 15. Residues lysine 16 and lysine 21 each carry the N6-acetyllysine modification. Lysine 121 is covalently cross-linked (Glycyl lysine isopeptide (Lys-Gly) (interchain with G-Cter in ubiquitin)).

Belongs to the histone H2B family. The nucleosome is a histone octamer containing two molecules each of H2A, H2B, H3 and H4 assembled in one H3-H4 heterotetramer and two H2A-H2B heterodimers. The octamer wraps approximately 147 bp of DNA. Monoubiquitination of Lys-121 by the BRE1 gives a specific tag for epigenetic transcriptional activation and is also prerequisite for histone H3 'Lys-4' and 'Lys-79' methylation. Post-translationally, phosphorylated on Ser-15 during apoptosis; which facilitates apoptotic chromatin condensation.

The protein resides in the nucleus. It is found in the chromosome. Core component of nucleosome. Nucleosomes wrap and compact DNA into chromatin, limiting DNA accessibility to the cellular machineries which require DNA as a template. Histones thereby play a central role in transcription regulation, DNA repair, DNA replication and chromosomal stability. DNA accessibility is regulated via a complex set of post-translational modifications of histones, also called histone code, and nucleosome remodeling. Functionally, has broad-spectrum antibacterial activity. May be important in the antimicrobial defenses of chick reproductive system during follicle development in the ovary and egg formation in the oviduct. In Gallus gallus (Chicken), this protein is Histone H2B 1/2/3/4/6 (H2B-I).